The primary structure comprises 327 residues: MTAATAQNIKSSLNTDRLKLISGTSNPILAKEISSYIGIEDVPVVSKRFADGELYVQIQQSIRGCDVFLIQPTCAPVNDSLMELMIMVDACKRASARQVTAVIPYFGYARADRKTAGRESITAKLTANLLVSSGVDRVLAMDLHSAQIQGYFDIPCDHIYGSPVLIDYLSTKNLDEIVVVSPDVGGVARARAFAKQMKDSPLAIIDKRRAAHNVAQSLTVIGDVANKTAILIDDMIDTGGTICAGAELLRKEGAKRVIACASHAVFSPPAYSRLSADDLFEEVVVTNSIPVPTSQYFEQLKVLSVANMLGEAIWRVHEESSISSMFR.

51 to 53 provides a ligand contact to ATP; the sequence is DGE. Mg(2+)-binding residues include His-144 and Asp-183. Lys-207 is a catalytic residue. D-ribose 5-phosphate is bound by residues Arg-209, Asp-233, and 237 to 241; that span reads DTGGT.

The protein belongs to the ribose-phosphate pyrophosphokinase family. Class I subfamily. Homohexamer. It depends on Mg(2+) as a cofactor.

It is found in the cytoplasm. The enzyme catalyses D-ribose 5-phosphate + ATP = 5-phospho-alpha-D-ribose 1-diphosphate + AMP + H(+). The protein operates within metabolic intermediate biosynthesis; 5-phospho-alpha-D-ribose 1-diphosphate biosynthesis; 5-phospho-alpha-D-ribose 1-diphosphate from D-ribose 5-phosphate (route I): step 1/1. In terms of biological role, involved in the biosynthesis of the central metabolite phospho-alpha-D-ribosyl-1-pyrophosphate (PRPP) via the transfer of pyrophosphoryl group from ATP to 1-hydroxyl of ribose-5-phosphate (Rib-5-P). This chain is Ribose-phosphate pyrophosphokinase, found in Prochlorococcus marinus (strain SARG / CCMP1375 / SS120).